A 566-amino-acid polypeptide reads, in one-letter code: Arginine--tRNA ligase (566 aa).

The 'HIGH' region signature appears at 121-131 (ANPNGPFHIGH).

This sequence belongs to the class-I aminoacyl-tRNA synthetase family.

The protein localises to the cytoplasm. It carries out the reaction tRNA(Arg) + L-arginine + ATP = L-arginyl-tRNA(Arg) + AMP + diphosphate. The sequence is that of Arginine--tRNA ligase from Methanococcus maripaludis (strain DSM 14266 / JCM 13030 / NBRC 101832 / S2 / LL).